The chain runs to 157 residues: SsrA-binding protein (157 aa).

Positions 133–157 (LHDKRESEKKRDWGREKGRLLRARG) are disordered. Over residues 135-151 (DKRESEKKRDWGREKGR) the composition is skewed to basic and acidic residues.

Belongs to the SmpB family.

It localises to the cytoplasm. In terms of biological role, required for rescue of stalled ribosomes mediated by trans-translation. Binds to transfer-messenger RNA (tmRNA), required for stable association of tmRNA with ribosomes. tmRNA and SmpB together mimic tRNA shape, replacing the anticodon stem-loop with SmpB. tmRNA is encoded by the ssrA gene; the 2 termini fold to resemble tRNA(Ala) and it encodes a 'tag peptide', a short internal open reading frame. During trans-translation Ala-aminoacylated tmRNA acts like a tRNA, entering the A-site of stalled ribosomes, displacing the stalled mRNA. The ribosome then switches to translate the ORF on the tmRNA; the nascent peptide is terminated with the 'tag peptide' encoded by the tmRNA and targeted for degradation. The ribosome is freed to recommence translation, which seems to be the essential function of trans-translation. The polypeptide is SsrA-binding protein (Bradyrhizobium sp. (strain BTAi1 / ATCC BAA-1182)).